The primary structure comprises 574 residues: Ribonuclease Y (574 aa).

Residues 1 to 21 (MSLLDLVLLLLVLGLGGVLLL) form a helical membrane-spanning segment. Residues 264–327 (AVTVVPIPSD…EIARMALEEL (64 aa)) enclose the KH domain. Residues 390 to 483 (VLKHSIQVAH…VAAADALSAA (94 aa)) form the HD domain.

The protein belongs to the RNase Y family.

Its subcellular location is the cell membrane. Endoribonuclease that initiates mRNA decay. In Thermus thermophilus (strain ATCC 27634 / DSM 579 / HB8), this protein is Ribonuclease Y.